The chain runs to 779 residues: Lon protease (779 aa).

The Lon N-terminal domain maps to 7 to 190 (VPVLFLNDSI…LLIGWTGDHL (184 aa)). 352-359 (GPPGVGKT) contacts ATP. One can recognise a Lon proteolytic domain in the interval 589–769 (TAVPGVATGL…ADIIAAALEP (181 aa)). Catalysis depends on residues serine 675 and lysine 718.

Belongs to the peptidase S16 family. As to quaternary structure, homohexamer. Organized in a ring with a central cavity. Oligomerization is Mg(2+)-dependent.

The protein resides in the cytoplasm. It carries out the reaction Hydrolysis of proteins in presence of ATP.. With respect to regulation, stimulated by unfolded protein. Functionally, ATP-dependent serine protease that mediates the selective degradation of mutant and abnormal proteins as well as certain short-lived regulatory proteins. Required for cellular homeostasis and for survival from DNA damage and developmental changes induced by stress. Degrades polypeptides processively to yield small peptide fragments that are 5 to 10 amino acids long. Binds to DNA in a double-stranded, site-specific manner. This is Lon protease from Mycolicibacterium smegmatis (Mycobacterium smegmatis).